Here is a 164-residue protein sequence, read N- to C-terminus: FMN reductase (NADH) RutF (164 aa).

The protein belongs to the non-flavoprotein flavin reductase family. RutF subfamily.

The enzyme catalyses FMNH2 + NAD(+) = FMN + NADH + 2 H(+). Catalyzes the reduction of FMN to FMNH2 which is used to reduce pyrimidine by RutA via the Rut pathway. The chain is FMN reductase (NADH) RutF from Shigella flexneri serotype X (strain 2002017).